Here is a 508-residue protein sequence, read N- to C-terminus: POTE ankyrin domain family member G (508 aa).

5 ANK repeats span residues 172-201 (QKRT…QLNI), 205-234 (KKRT…DPNI), 238-267 (YGNT…DIES), 271-300 (HGLT…NLNA), and 304-333 (YGRT…DVSS). Positions 367–376 (KVSSENSNPE) are enriched in polar residues. The segment at 367–488 (KVSSENSNPE…QLSEEQNTGI (122 aa)) is disordered. Composition is skewed to basic and acidic residues over residues 377–392 (QDLK…RLKG) and 406–421 (EINK…EMKK). Residues 476–488 (TQKQLSEEQNTGI) show a composition bias toward polar residues.

It belongs to the POTE family.

This Homo sapiens (Human) protein is POTE ankyrin domain family member G (POTEG).